The chain runs to 72 residues: MILFPSVDELLKHIDSRYSLVMLASKRANELDAGAAPLLEHYDSSKSVGKALEEILAGKVTIDPDHTEDLQD.

The protein belongs to the RNA polymerase subunit omega family. In terms of assembly, the RNAP catalytic core consists of 2 alpha, 1 beta, 1 beta' and 1 omega subunit. When a sigma factor is associated with the core the holoenzyme is formed, which can initiate transcription.

The enzyme catalyses RNA(n) + a ribonucleoside 5'-triphosphate = RNA(n+1) + diphosphate. Promotes RNA polymerase assembly. Latches the N- and C-terminal regions of the beta' subunit thereby facilitating its interaction with the beta and alpha subunits. This is DNA-directed RNA polymerase subunit omega from Limosilactobacillus reuteri (strain DSM 20016) (Lactobacillus reuteri).